Here is a 388-residue protein sequence, read N- to C-terminus: Ras-related protein Rab-26 (388 aa).

A disordered region spans residues M1–G115. Residues G7 to P21 are compositionally biased toward gly residues. Over residues R47 to F56 the composition is skewed to basic and acidic residues. The segment covering P67 to H86 has biased composition (low complexity). The span at N87–S109 shows a compositional bias: basic residues. G197–T204 is a binding site for GTP. An Effector region motif is present at residues S219–L228. GTP contacts are provided by residues D246–Q250 and N304–D307. C382 is lipidated: S-palmitoyl cysteine. Cysteine methyl ester is present on C385. C385 carries S-geranylgeranyl cysteine lipidation. Positions R386–M388 are cleaved as a propeptide — removed in mature form.

Belongs to the small GTPase superfamily. Rab family.

The protein localises to the cell membrane. In terms of biological role, participates in exocrine secretion. The chain is Ras-related protein Rab-26 from Drosophila melanogaster (Fruit fly).